The chain runs to 187 residues: UPF0301 protein YE3428 (187 aa).

It belongs to the UPF0301 (AlgH) family.

The sequence is that of UPF0301 protein YE3428 from Yersinia enterocolitica serotype O:8 / biotype 1B (strain NCTC 13174 / 8081).